The sequence spans 136 residues: MLRTILGSKIHRATVTQADLDYVGSVTIDADLVHAAGLIEGEKVAIVDITNGARLETYVIVGDAGTGNICINGAAAHLINPGDLVIIMSYLQATDAEAKAYEPKIVHVDADNRIVALGNDLAEALPGSGLLTSRSI.

The Schiff-base intermediate with substrate; via pyruvic acid role is filled by Ser-25. The residue at position 25 (Ser-25) is a Pyruvic acid (Ser). Thr-57 lines the substrate pocket. Catalysis depends on Tyr-58, which acts as the Proton donor. Residue 73 to 75 participates in substrate binding; sequence GAA.

It belongs to the PanD family. In terms of assembly, heterooctamer of four alpha and four beta subunits. It depends on pyruvate as a cofactor. In terms of processing, is synthesized initially as an inactive proenzyme, which is activated by self-cleavage at a specific serine bond to produce a beta-subunit with a hydroxyl group at its C-terminus and an alpha-subunit with a pyruvoyl group at its N-terminus.

Its subcellular location is the cytoplasm. It catalyses the reaction L-aspartate + H(+) = beta-alanine + CO2. It participates in cofactor biosynthesis; (R)-pantothenate biosynthesis; beta-alanine from L-aspartate: step 1/1. In terms of biological role, catalyzes the pyruvoyl-dependent decarboxylation of aspartate to produce beta-alanine. The protein is Aspartate 1-decarboxylase of Corynebacterium glutamicum (strain R).